We begin with the raw amino-acid sequence, 290 residues long: 33 kDa chaperonin (290 aa).

Cystine bridges form between C235/C237 and C268/C271.

It belongs to the HSP33 family. In terms of processing, under oxidizing conditions two disulfide bonds are formed involving the reactive cysteines. Under reducing conditions zinc is bound to the reactive cysteines and the protein is inactive.

It is found in the cytoplasm. In terms of biological role, redox regulated molecular chaperone. Protects both thermally unfolding and oxidatively damaged proteins from irreversible aggregation. Plays an important role in the bacterial defense system toward oxidative stress. The sequence is that of 33 kDa chaperonin from Streptococcus pyogenes serotype M5 (strain Manfredo).